The chain runs to 359 residues: HTH-type transcriptional regulator Rv3575c (359 aa).

The HTH lacI-type domain occupies 9-64; sequence ATLASLAAELKVSRTTVSNAFNRPDQLSADLRERVLATAKRLGYAGPDPVARSLRT. A DNA-binding region (H-T-H motif) is located at residues 11–30; it reads LASLAAELKVSRTTVSNAFN.

Functionally, transcriptional regulator that negatively regulates transcription of the mce4 operon, which is involved in cholesterol transport and utilization. Acts by binding to the promoter region of the mce4 operon. It affects the utilization of host cholesterol as a carbon source, impacting the host's innate immune response. The polypeptide is HTH-type transcriptional regulator Rv3575c (Mycobacterium tuberculosis (strain ATCC 25618 / H37Rv)).